The following is a 310-amino-acid chain: tRNA uridine(34) hydroxylase (310 aa).

The region spanning 124-218 (SDPEVLLIDT…YFEEVPQEES (95 aa)) is the Rhodanese domain. The active-site Cysteine persulfide intermediate is the Cys-178.

Belongs to the TrhO family.

It carries out the reaction uridine(34) in tRNA + AH2 + O2 = 5-hydroxyuridine(34) in tRNA + A + H2O. Catalyzes oxygen-dependent 5-hydroxyuridine (ho5U) modification at position 34 in tRNAs. This is tRNA uridine(34) hydroxylase from Pseudomonas putida (strain W619).